We begin with the raw amino-acid sequence, 102 residues long: Ferredoxin, 2Fe-2S (102 aa).

Residues C11, C24, C56, and C60 each contribute to the [2Fe-2S] cluster site.

This sequence belongs to the 2Fe2S Shethna-type ferredoxin family. Requires [2Fe-2S] cluster as cofactor.

Ferredoxins are iron-sulfur proteins that transfer electrons in a wide variety of metabolic reactions. The sequence is that of Ferredoxin, 2Fe-2S from Clostridium pasteurianum.